A 298-amino-acid polypeptide reads, in one-letter code: Foldase protein PrsA 1 (298 aa).

The N-terminal stretch at 1–19 is a signal peptide; that stretch reads MKKWLIALAGVLLTFTLAG. A lipid anchor (N-palmitoyl cysteine) is attached at cysteine 20. Cysteine 20 carries the S-diacylglycerol cysteine lipid modification. In terms of domain architecture, PpiC spans 136–232; sequence EPKVTVQHIL…NGYEIIRMIK (97 aa).

This sequence belongs to the PrsA family.

It is found in the cell membrane. It carries out the reaction [protein]-peptidylproline (omega=180) = [protein]-peptidylproline (omega=0). Plays a major role in protein secretion by helping the post-translocational extracellular folding of several secreted proteins. This chain is Foldase protein PrsA 1 (prsA1), found in Lactiplantibacillus plantarum (strain ATCC BAA-793 / NCIMB 8826 / WCFS1) (Lactobacillus plantarum).